A 446-amino-acid polypeptide reads, in one-letter code: Maltoporin (446 aa).

The N-terminal stretch at 1–25 is a signal peptide; sequence MMITLRKLPLAVAVAAGVMSAQAMA.

Belongs to the porin LamB (TC 1.B.3) family. In terms of assembly, homotrimer formed of three 18-stranded antiparallel beta-barrels, containing three independent channels.

The protein localises to the cell outer membrane. The enzyme catalyses beta-maltose(in) = beta-maltose(out). In terms of biological role, involved in the transport of maltose and maltodextrins. The polypeptide is Maltoporin (Escherichia coli O127:H6 (strain E2348/69 / EPEC)).